The chain runs to 464 residues: tRNA modification GTPase MnmE (464 aa).

(6S)-5-formyl-5,6,7,8-tetrahydrofolate-binding residues include Arg-27, Glu-90, and Lys-129. Residues 222–384 (GVTLVLAGSV…LYDRIRSFIA (163 aa)) form the TrmE-type G domain. Residues 232 to 237 (NVGKSS), 251 to 257 (SSYAGTT), and 276 to 279 (DTAG) contribute to the GTP site. Ser-236 contributes to the Mg(2+) binding site. Ser-251 serves as a coordination point for K(+). Position 257 (Thr-257) interacts with Mg(2+). Lys-464 contributes to the (6S)-5-formyl-5,6,7,8-tetrahydrofolate binding site.

The protein belongs to the TRAFAC class TrmE-Era-EngA-EngB-Septin-like GTPase superfamily. TrmE GTPase family. In terms of assembly, homodimer. Heterotetramer of two MnmE and two MnmG subunits. K(+) serves as cofactor.

It localises to the cytoplasm. Its function is as follows. Exhibits a very high intrinsic GTPase hydrolysis rate. Involved in the addition of a carboxymethylaminomethyl (cmnm) group at the wobble position (U34) of certain tRNAs, forming tRNA-cmnm(5)s(2)U34. The chain is tRNA modification GTPase MnmE from Borrelia recurrentis (strain A1).